The chain runs to 81 residues: Beta-catenin-interacting protein 1 (81 aa).

At S59 the chain carries Phosphoserine.

The protein belongs to the CTNNBIP1 family. In terms of assembly, binds CTNNB1.

It localises to the cytoplasm. Its subcellular location is the nucleus. In terms of biological role, prevents the interaction between CTNNB1 and TCF family members, and acts as a negative regulator of the Wnt signaling pathway. This Homo sapiens (Human) protein is Beta-catenin-interacting protein 1 (CTNNBIP1).